The following is a 611-amino-acid chain: Acetylcholinesterase (611 aa).

Positions 1 to 31 (MRPPWCPLYTPSLAAPILLLLLFLLGGGAEA) are cleaved as a signal peptide. C97 and C124 form a disulfide bridge. S231 acts as the Acyl-ester intermediate in catalysis. C285 and C300 are oxidised to a cystine. Residue N293 is glycosylated (N-linked (GlcNAc...) asparagine). E362 serves as the catalytic Charge relay system. N378 carries an N-linked (GlcNAc...) asparagine glycan. Residues C437 and C557 are joined by a disulfide bond. Catalysis depends on H475, which acts as the Charge relay system. N-linked (GlcNAc...) asparagine glycosylation occurs at N492.

The protein belongs to the type-B carboxylesterase/lipase family. In terms of assembly, interacts with PRIMA1. The interaction with PRIMA1 is required to anchor it to the basal lamina of cells and organize into tetramers. Isoform H generates GPI-anchored dimers; disulfide linked. Isoform T generates multiple structures, ranging from monomers and dimers to collagen-tailed and hydrophobic-tailed forms, in which catalytic tetramers are associated with anchoring proteins that attach them to the basal lamina or to cell membranes. In the collagen-tailed forms, isoform T subunits are associated with a specific collagen, COLQ, which triggers the formation of isoform T tetramers, from monomers and dimers.

It is found in the synapse. It localises to the secreted. The protein localises to the cell membrane. It catalyses the reaction acetylcholine + H2O = choline + acetate + H(+). Functionally, terminates signal transduction at the neuromuscular junction by rapid hydrolysis of the acetylcholine released into the synaptic cleft. The protein is Acetylcholinesterase (ACHE) of Felis catus (Cat).